A 177-amino-acid chain; its full sequence is Large ribosomal subunit protein uL6 (177 aa).

Belongs to the universal ribosomal protein uL6 family. Part of the 50S ribosomal subunit.

Functionally, this protein binds to the 23S rRNA, and is important in its secondary structure. It is located near the subunit interface in the base of the L7/L12 stalk, and near the tRNA binding site of the peptidyltransferase center. This chain is Large ribosomal subunit protein uL6, found in Ectopseudomonas mendocina (strain ymp) (Pseudomonas mendocina).